We begin with the raw amino-acid sequence, 69 residues long: Large ribosomal subunit protein uL29 (69 aa).

This sequence belongs to the universal ribosomal protein uL29 family.

The sequence is that of Large ribosomal subunit protein uL29 from Polaromonas sp. (strain JS666 / ATCC BAA-500).